The sequence spans 183 residues: UPF0316 protein BcerKBAB4_3093 (183 aa).

3 consecutive transmembrane segments (helical) span residues leucine 6–valine 26, serine 32–phenylalanine 52, and tryptophan 58–isoleucine 78.

It belongs to the UPF0316 family.

The protein resides in the cell membrane. The polypeptide is UPF0316 protein BcerKBAB4_3093 (Bacillus mycoides (strain KBAB4) (Bacillus weihenstephanensis)).